We begin with the raw amino-acid sequence, 928 residues long: DNA-binding protein RFX6 (928 aa).

2 disordered regions span residues 1 to 20 and 50 to 98; these read MAKV…APQL and EGQP…SKTK. Positions 124 to 199 form a DNA-binding region, RFX-type winged-helix; that stretch reads TLQWLEENYI…YHYYGIGIKE (76 aa).

Belongs to the RFX family. Interacts with RFX3. In terms of tissue distribution, expressed in pancreas. Expressed in pancreatic beta-cells (insulin-positive cells) and alpha-cells (glucagon-positive cells) (at protein level). Specifically expressed in pancreas, small intestine and colon. Expressed in endocrine cells in the islets.

The protein localises to the nucleus. Functionally, transcription factor required to direct islet cell differentiation during endocrine pancreas development. Specifically required for the differentiation of 4 of the 5 islet cell types and for the production of insulin. Not required for pancreatic PP (polypeptide-producing) cells differentiation. Acts downstream of NEUROG3 and regulates the transcription factors involved in beta-cell maturation and function, thereby restricting the expression of the beta-cell differentiation and specification genes, and thus the beta-cell fate choice. Activates transcription by forming a heterodimer with RFX3 and binding to the X-box in the promoter of target genes. Involved in glucose-stimulated insulin secretion by promoting insulin and L-type calcium channel gene transcription. The protein is DNA-binding protein RFX6 (RFX6) of Homo sapiens (Human).